A 169-amino-acid polypeptide reads, in one-letter code: Large ribosomal subunit protein uL10 (169 aa).

This sequence belongs to the universal ribosomal protein uL10 family. As to quaternary structure, part of the ribosomal stalk of the 50S ribosomal subunit. The N-terminus interacts with L11 and the large rRNA to form the base of the stalk. The C-terminus forms an elongated spine to which L12 dimers bind in a sequential fashion forming a multimeric L10(L12)X complex.

Forms part of the ribosomal stalk, playing a central role in the interaction of the ribosome with GTP-bound translation factors. This is Large ribosomal subunit protein uL10 from Rickettsia massiliae (strain Mtu5).